The sequence spans 523 residues: DNA-(apurinic or apyrimidinic site) endonuclease 2 (523 aa).

Glu-42 provides a ligand contact to Mg(2+). Tyr-151 is an active-site residue. 3 residues coordinate Mg(2+): Asp-191, Asn-193, and Asp-294. Asp-191 functions as the Proton donor/acceptor in the catalytic mechanism. Residues 348–392 (MKKNKNNSPTQSENVSASASSGSSPTVSRANSVIDVDAYPPEKRR) form a disordered region. Polar residues predominate over residues 353–362 (NNSPTQSENV). Positions 458, 461, 484, and 508 each coordinate Zn(2+). A GRF-type zinc finger spans residues 458 to 517 (CEGHKEPCKYLTVRKPGINYGRKFWICARPVGELIKNSNAVSEEDTQPFQCRFFIWDSDW).

The protein belongs to the DNA repair enzymes AP/ExoA family. Mg(2+) is required as a cofactor. The cofactor is Mn(2+).

The protein localises to the nucleus. It catalyses the reaction Exonucleolytic cleavage in the 3'- to 5'-direction to yield nucleoside 5'-phosphates.. DNA repair enzyme that cleaves apurinic/apyrimidinic (AP) sites and removes 3'-blocking groups present at single strand breaks of damaged DNA. Provides the majority of the AP-endonuclease (APE) activity. Repairs phleomycin D1-induced DNA damage. Plays a role in oxidative damage repair. The sequence is that of DNA-(apurinic or apyrimidinic site) endonuclease 2 (apn2) from Schizosaccharomyces pombe (strain 972 / ATCC 24843) (Fission yeast).